We begin with the raw amino-acid sequence, 353 residues long: Cruciform cutting endonuclease 1, mitochondrial (353 aa).

Mg(2+) contacts are provided by Asp-293 and Asp-294.

As to quaternary structure, homodimer. Mg(2+) serves as cofactor.

The protein resides in the mitochondrion. The catalysed reaction is Endonucleolytic cleavage at a junction such as a reciprocal single-stranded crossover between two homologous DNA duplexes (Holliday junction).. Functionally, capable of resolving Holliday junctions. Specific for 4-way junctions. Seems to be important for the maintenance of mitochondrial DNA. Cleaves fixed junctions at the point of strand exchange. Cleaves after 5'-CT-3' sequence. This is Cruciform cutting endonuclease 1, mitochondrial (CCE1) from Saccharomyces cerevisiae (strain ATCC 204508 / S288c) (Baker's yeast).